A 102-amino-acid polypeptide reads, in one-letter code: MIHKLTSEERKTRLEGLPHWTAVPGRDAIQRSLRFADFNEAFGFMTRIAIKAQEMNHHPEWFNVYNRVDITLSTHDAHGLTERDIALAQFIDHVCAHTEPAA.

This sequence belongs to the pterin-4-alpha-carbinolamine dehydratase family.

It carries out the reaction (4aS,6R)-4a-hydroxy-L-erythro-5,6,7,8-tetrahydrobiopterin = (6R)-L-erythro-6,7-dihydrobiopterin + H2O. The chain is Putative pterin-4-alpha-carbinolamine dehydratase from Burkholderia ambifaria (strain MC40-6).